The primary structure comprises 177 residues: GTP-dependent dephospho-CoA kinase (177 aa).

GTP-binding residues include D45, V46, V47, D64, and E120.

It belongs to the GTP-dependent DPCK family.

The catalysed reaction is 3'-dephospho-CoA + GTP = GDP + CoA + H(+). It functions in the pathway cofactor biosynthesis; coenzyme A biosynthesis. Functionally, catalyzes the GTP-dependent phosphorylation of the 3'-hydroxyl group of dephosphocoenzyme A to form coenzyme A (CoA). This is GTP-dependent dephospho-CoA kinase from Halobacterium salinarum (strain ATCC 29341 / DSM 671 / R1).